The primary structure comprises 109 residues: Peptide chaperone MftB (109 aa).

The protein belongs to the peptide chaperone MftB family. As to quaternary structure, interacts with MftA and MftC.

In terms of biological role, peptide chaperone involved in the biosynthesis of the enzyme cofactor mycofactocin (MFT). Binds MftA and MftC with high affinity, and is essential for MftC activity on MftA, likely via the formation of a ternary complex. The chain is Peptide chaperone MftB from Mycobacterium ulcerans (strain Agy99).